Consider the following 162-residue polypeptide: MTEQLNTNQQNDEAQFMIQRIYIKDLSYETPNTPAVFQQQWEPELKLDLNTTTTQLDKNVYEVVLTVTTTVMNQKTTAFLVEVKQAGIFTIQGAAASQLDHLLHSFCPSILFPYAREAITSQVIRGSFPQLVLAPINFDALYMQQLEEKQKATGAKDETVSH.

It belongs to the SecB family. In terms of assembly, homotetramer, a dimer of dimers. One homotetramer interacts with 1 SecA dimer.

The protein resides in the cytoplasm. In terms of biological role, one of the proteins required for the normal export of preproteins out of the cell cytoplasm. It is a molecular chaperone that binds to a subset of precursor proteins, maintaining them in a translocation-competent state. It also specifically binds to its receptor SecA. The protein is Protein-export protein SecB of Legionella pneumophila (strain Paris).